The sequence spans 302 residues: DNA-directed RNA polymerase II subunit rpb3 (302 aa).

It belongs to the archaeal Rpo3/eukaryotic RPB3 RNA polymerase subunit family. Component of the RNA polymerase II (Pol II) complex consisting of 12 subunits.

It is found in the nucleus. In terms of biological role, DNA-dependent RNA polymerase catalyzes the transcription of DNA into RNA using the four ribonucleoside triphosphates as substrates. Component of RNA polymerase II which synthesizes mRNA precursors and many functional non-coding RNAs. Pol II is the central component of the basal RNA polymerase II transcription machinery. It is composed of mobile elements that move relative to each other. Rpb3 is part of the core element with the central large cleft and the clamp element that moves to open and close the cleft. This Dictyostelium discoideum (Social amoeba) protein is DNA-directed RNA polymerase II subunit rpb3 (polr2c).